Consider the following 199-residue polypeptide: Charged multivesicular body protein 1B2 (199 aa).

The stretch at 15-47 forms a coiled coil; that stretch reads AKELNRNAKKCDKEEKAEKAKIKKAIQKGNTEV. The segment at 132-156 is interaction with IST1; sequence MEDTMSSTTTLTTPQNQVDMLLQEM. Positions 167–199 are disordered; the sequence is ELPQGQTGSVGASVASTEQDELSQRLARLRDQV. Residues 170–183 show a composition bias toward polar residues; the sequence is QGQTGSVGASVAST. An interaction with SPAST region spans residues 174 to 199; it reads GSVGASVASTEQDELSQRLARLRDQV. The stretch at 177–199 forms a coiled coil; sequence GASVASTEQDELSQRLARLRDQV. The segment at 180 to 196 is interaction with VPS4A, MITD1 and STAMBP; sequence VASTEQDELSQRLARLR. Residues 180–199 form an interaction with VTA1 region; sequence VASTEQDELSQRLARLRDQV. The interval 183–199 is interaction with VPS4B; it reads TEQDELSQRLARLRDQV. The MIT-interacting motif signature appears at 186-196; that stretch reads DELSQRLARLR.

It belongs to the SNF7 family. Probable peripherally associated component of the endosomal sorting required for transport complex III (ESCRT-III). ESCRT-III components are thought to multimerize to form a flat lattice on the perimeter membrane of the endosome. Several assembly forms of ESCRT-III may exist that interact and act sequentially. Interacts with CHMP1A. Interacts with VTA1; the interaction probably involves the open conformation of CHMP1B. Interacts with CHMP2A. Interacts with VPS4A; the interaction is direct. Interacts with VPS4B; the interaction is direct. Interacts with SPAST (via MIT domain); the interaction is direct. Interacts with IST1. Interacts with MITD1. Interacts with STAMBP.

It is found in the cytoplasm. Its subcellular location is the cytosol. It localises to the endosome. The protein resides in the late endosome membrane. Its function is as follows. Probable peripherally associated component of the endosomal sorting required for transport complex III (ESCRT-III) which is involved in multivesicular bodies (MVBs) formation and sorting of endosomal cargo proteins into MVBs. MVBs contain intraluminal vesicles (ILVs) that are generated by invagination and scission from the limiting membrane of the endosome and mostly are delivered to lysosomes enabling degradation of membrane proteins, such as stimulated growth factor receptors, lysosomal enzymes and lipids. The MVB pathway appears to require the sequential function of ESCRT-O, -I,-II and -III complexes. ESCRT-III proteins mostly dissociate from the invaginating membrane before the ILV is released. The ESCRT machinery also functions in topologically equivalent membrane fission events, such as the terminal stages of cytokinesis. ESCRT-III proteins are believed to mediate the necessary vesicle extrusion and/or membrane fission activities, possibly in conjunction with the AAA ATPase VPS4. Involved in cytokinesis. Involved in recruiting VPS4A and/or VPS4B and SPAST to the midbody of dividing cells. This chain is Charged multivesicular body protein 1B2, found in Mus musculus (Mouse).